The sequence spans 344 residues: Trace amine-associated receptor 8b (344 aa).

Residues 1–33 (MTSNFSQATLQLCYENVNASCIKTPYSPGLRVL) lie on the Extracellular side of the membrane. Asn4 and Asn18 each carry an N-linked (GlcNAc...) asparagine glycan. 2 cysteine pairs are disulfide-bonded: Cys21/Cys185 and Cys104/Cys189. The chain crosses the membrane as a helical span at residues 34–54 (LYMVFGFGAVLAVCGNLLVVI). At 55 to 67 (SVLHFKQLHSPAN) the chain is on the cytoplasmic side. Residues 68–88 (FLIASLASADFLVGISVMPFS) form a helical membrane-spanning segment. Over 89–102 (MVRSIESCWYFGDT) the chain is Extracellular. The chain crosses the membrane as a helical span at residues 103-127 (FCSLHSCCDAAFCYSSLFHLCFISV). At 128–146 (DRYIAVTEPLVYPTKFTMS) the chain is on the cytoplasmic side. The helical transmembrane segment at 147–167 (VSGICISISWILPLVYSSAVF) threads the bilayer. The Extracellular segment spans residues 168–196 (YTGISATGIENLVSALNCVGGCQVAINQD). Residues 197-217 (WVLISFLLFFIPTLVMIILYS) traverse the membrane as a helical segment. Residues 218–256 (KIFLVAKQQAVKIETSISGSKGESSLESHKARVAKRERK) lie on the Cytoplasmic side of the membrane. Residues 257-277 (AAKTLGVTVMAFMVSWLPYTI) form a helical membrane-spanning segment. At 278–295 (DTLIDAFMGFITPAYVYE) the chain is on the extracellular side. The chain crosses the membrane as a helical span at residues 296–319 (ICGWIAYYNSAMNPLIYAFFYPWF). The Cytoplasmic portion of the chain corresponds to 320–344 (RKAIKLILSGKILKGHSSTTSLFSE).

The protein belongs to the G-protein coupled receptor 1 family.

Its subcellular location is the cell membrane. Its function is as follows. Olfactory receptor activated by trace amines. Trace amine compounds are enriched in animal body fluids and act on trace amine-associated receptors (TAARs) to elicit both intraspecific and interspecific innate behaviors. Ligand-binding causes a conformation change that triggers signaling via G(s)-class of G alpha proteins (GNAL or GNAS). The chain is Trace amine-associated receptor 8b from Rattus norvegicus (Rat).